A 338-amino-acid polypeptide reads, in one-letter code: 1-aminocyclopropane-1-carboxylate deaminase (338 aa).

Lys-51 is subject to N6-(pyridoxal phosphate)lysine. Catalysis depends on Ser-78, which acts as the Nucleophile.

The protein belongs to the ACC deaminase/D-cysteine desulfhydrase family. In terms of assembly, homotrimer. Pyridoxal 5'-phosphate is required as a cofactor.

The enzyme catalyses 1-aminocyclopropane-1-carboxylate + H2O = 2-oxobutanoate + NH4(+). Its function is as follows. Catalyzes a cyclopropane ring-opening reaction, the irreversible conversion of 1-aminocyclopropane-1-carboxylate (ACC) to ammonia and alpha-ketobutyrate. Allows growth on ACC as a nitrogen source. The polypeptide is 1-aminocyclopropane-1-carboxylate deaminase (Methylibium petroleiphilum (strain ATCC BAA-1232 / LMG 22953 / PM1)).